Consider the following 75-residue polypeptide: DNA-directed RNA polymerase subunit omega (75 aa).

Belongs to the RNA polymerase subunit omega family. In terms of assembly, in cyanobacteria the RNAP catalytic core is composed of 2 alpha, 1 beta, 1 beta', 1 gamma and 1 omega subunit. When a sigma factor is associated with the core the holoenzyme is formed, which can initiate transcription.

The catalysed reaction is RNA(n) + a ribonucleoside 5'-triphosphate = RNA(n+1) + diphosphate. Its function is as follows. Promotes RNA polymerase assembly. Latches the N- and C-terminal regions of the beta' subunit thereby facilitating its interaction with the beta and alpha subunits. In Synechococcus sp. (strain WH7803), this protein is DNA-directed RNA polymerase subunit omega.